The chain runs to 150 residues: Leukotriene C4 synthase (150 aa).

Over 1-6 (MKDEVA) the chain is Cytoplasmic. A helical membrane pass occupies residues 7–27 (LLASVTLLGVLLQAYFSLQVI). Residues 28-48 (SARRAFRVSPPLTTGPPEFER) are Lumenal-facing. Arg-30 serves as a coordination point for glutathione. Arg-31 acts as the Proton donor in catalysis. The residue at position 36 (Ser-36) is a Phosphoserine. A helical membrane pass occupies residues 49 to 69 (IYRAQVNCSEYFPLFLAMLWV). Glutathione contacts are provided by residues 51–55 (RAQVN) and 58–59 (EY). Over 70-73 (AGIF) the chain is Cytoplasmic. Residues 74-94 (FHEGAAALCGLVYLFARLRYF) traverse the membrane as a helical segment. 93 to 97 (YFQGY) is a binding site for glutathione. Residues 95-104 (QGYARSAQQR) lie on the Lumenal side of the membrane. Catalysis depends on Arg-104, which acts as the Proton acceptor. The chain crosses the membrane as a helical span at residues 105 to 124 (LAPLYASARALWLLVALAAL). The Cytoplasmic segment spans residues 125–150 (GLLAHFLPAELRAALLGQLRKLLLRS).

It belongs to the MAPEG family. As to quaternary structure, homotrimer. Interacts with ALOX5AP and ALOX5. Phosphorylation at Ser-36 by RPS6KB1 inhibits the leukotriene-C4 synthase activity.

The protein resides in the nucleus outer membrane. Its subcellular location is the endoplasmic reticulum membrane. It localises to the nucleus membrane. The catalysed reaction is leukotriene C4 = leukotriene A4 + glutathione. It carries out the reaction (13S,14S)-epoxy-(4Z,7Z,9E,11E,16Z,19Z)-docosahexaenoate + glutathione = (13R)-S-glutathionyl-(14S)-hydroxy-(4Z,7Z,9E,11E,16Z,19Z)-docosahexaenoate. The protein operates within lipid metabolism; leukotriene C4 biosynthesis. Inhibited by MK886. Functionally, catalyzes the conjugation of leukotriene A4 with reduced glutathione (GSH) to form leukotriene C4 with high specificity. Can also catalyze the transfer of a glutathionyl group from glutathione (GSH) to 13(S),14(S)-epoxy-docosahexaenoic acid to form maresin conjugate in tissue regeneration 1 (MCTR1), a bioactive lipid mediator that possess potent anti-inflammatory and proresolving actions. This Bos taurus (Bovine) protein is Leukotriene C4 synthase (LTC4S).